The primary structure comprises 211 residues: Redox-sensing transcriptional repressor Rex (211 aa).

The H-T-H motif DNA-binding region spans 17 to 56 (LYYRFVSILKGKGIDRVNSKTISEALQIDSATIRRDFSYF). Position 91-96 (91-96 (GIGNLG)) interacts with NAD(+).

The protein belongs to the transcriptional regulatory Rex family. As to quaternary structure, homodimer.

It is found in the cytoplasm. Its function is as follows. Modulates transcription in response to changes in cellular NADH/NAD(+) redox state. This is Redox-sensing transcriptional repressor Rex from Staphylococcus epidermidis (strain ATCC 35984 / DSM 28319 / BCRC 17069 / CCUG 31568 / BM 3577 / RP62A).